The primary structure comprises 565 residues: Dihydroxy-acid dehydratase (565 aa).

Mg(2+) is bound at residue Asp-80. Cys-121 is a binding site for [2Fe-2S] cluster. Mg(2+) is bound by residues Asp-122 and Lys-123. Lys-123 is modified (N6-carboxylysine). Cys-194 provides a ligand contact to [2Fe-2S] cluster. A Mg(2+)-binding site is contributed by Glu-447. Residue Ser-473 is the Proton acceptor of the active site.

It belongs to the IlvD/Edd family. As to quaternary structure, homodimer. It depends on [2Fe-2S] cluster as a cofactor. Mg(2+) is required as a cofactor.

It carries out the reaction (2R)-2,3-dihydroxy-3-methylbutanoate = 3-methyl-2-oxobutanoate + H2O. The enzyme catalyses (2R,3R)-2,3-dihydroxy-3-methylpentanoate = (S)-3-methyl-2-oxopentanoate + H2O. The protein operates within amino-acid biosynthesis; L-isoleucine biosynthesis; L-isoleucine from 2-oxobutanoate: step 3/4. It participates in amino-acid biosynthesis; L-valine biosynthesis; L-valine from pyruvate: step 3/4. In terms of biological role, functions in the biosynthesis of branched-chain amino acids. Catalyzes the dehydration of (2R,3R)-2,3-dihydroxy-3-methylpentanoate (2,3-dihydroxy-3-methylvalerate) into 2-oxo-3-methylpentanoate (2-oxo-3-methylvalerate) and of (2R)-2,3-dihydroxy-3-methylbutanoate (2,3-dihydroxyisovalerate) into 2-oxo-3-methylbutanoate (2-oxoisovalerate), the penultimate precursor to L-isoleucine and L-valine, respectively. The chain is Dihydroxy-acid dehydratase from Chlorobium phaeovibrioides (strain DSM 265 / 1930) (Prosthecochloris vibrioformis (strain DSM 265)).